Reading from the N-terminus, the 154-residue chain is Large ribosomal subunit protein uL13 (154 aa).

The protein belongs to the universal ribosomal protein uL13 family. In terms of assembly, part of the 50S ribosomal subunit.

This protein is one of the early assembly proteins of the 50S ribosomal subunit, although it is not seen to bind rRNA by itself. It is important during the early stages of 50S assembly. This Rhizobium etli (strain CIAT 652) protein is Large ribosomal subunit protein uL13.